The sequence spans 304 residues: Cell surface-binding protein OPG105 (304 aa).

The Alpha-carbonic anhydrase domain maps to 1–235 (MPQQLSPINI…NDDTQVYYSG (235 aa)). The Virion surface portion of the chain corresponds to 1–275 (MPQQLSPINI…YQKYIEENKT (275 aa)). The chain crosses the membrane as a helical span at residues 276–294 (FAIIAIVFVFILTAILFFM). The Intravirion segment spans residues 295-304 (SRRYSREKQN).

This sequence belongs to the alpha-carbonic anhydrase family. As to quaternary structure, homodimer; disulfide-linked. Apparently non-glycosylated.

It is found in the virion membrane. Its function is as follows. Binds to chondroitin sulfate on the cell surface to provide virion attachment to target cell. This is Cell surface-binding protein OPG105 (OPG105) from Bos taurus (Bovine).